We begin with the raw amino-acid sequence, 469 residues long: F-box only protein 3 (469 aa).

In terms of domain architecture, F-box spans 10–56 (PLTLESLPTDPLLLILSFLDYRDLINCCYVSRRLSQLSSHDPLWRRH). Residues 278–408 (VATTGDITVS…FHMACPTFRV (131 aa)) enclose the ApaG domain. The segment covering 419–449 (EYEEMEEEEEEEEEEDDDDSADMDESDDDEE) has biased composition (acidic residues). Residues 419–454 (EYEEMEEEEEEEEEEDDDDSADMDESDDDEEERQRR) are disordered.

As to quaternary structure, part of a SCF (SKP1-cullin-F-box) protein ligase complex SCF(FBXO3) consisting of FBXO3, SKP1, CUL1 and RBX1. Interacts with PML, interaction is direct and takes place either alone or within the SCF complex.

It is found in the nucleus. It participates in protein modification; protein ubiquitination. Functionally, substrate recognition component of the SCF (SKP1-CUL1-F-box protein)-type E3 ubiquitin ligase complex, SCF(FBXO3), which mediates the ubiquitination and subsequent proteasomal degradation of target proteins. Mediates the ubiquitination of HIPK2 and probably that of EP300, leading to rapid degradation by the proteasome. In the presence of PML, HIPK2 ubiquitination still occurs, but degradation is prevented. PML, HIPK2 and FBXO3 may act synergically to activate p53/TP53-dependent transactivation. The SCF(FBXO3) also acts as a regulator of inflammation by mediating ubiquitination and degradation of FBXL2 in response to lipopolysaccharide (LPS). The SCF(FBXO3) complex specifically recognizes FBXL2 phosphorylated at 'Thr-404' and promotes its ubiquitination. This is F-box only protein 3 (FBXO3) from Bos taurus (Bovine).